The chain runs to 446 residues: Elongation factor 1-alpha (446 aa).

Residues 5–230 (KNHLNLVVIG…DALDQPKRPK (226 aa)) enclose the tr-type G domain. Residues 14-21 (GHVDSGKS) are G1. 14-21 (GHVDSGKS) is a binding site for GTP. Positions 70 to 74 (GITID) are G2. The segment at 91-94 (DAPG) is G3. GTP contacts are provided by residues 91-95 (DAPGH) and 153-156 (NKMD). The segment at 153-156 (NKMD) is G4. A G5 region spans residues 194–196 (SGW).

It belongs to the TRAFAC class translation factor GTPase superfamily. Classic translation factor GTPase family. EF-Tu/EF-1A subfamily.

It is found in the cytoplasm. This protein promotes the GTP-dependent binding of aminoacyl-tRNA to the A-site of ribosomes during protein biosynthesis. The chain is Elongation factor 1-alpha (EFAA) from Stylonychia lemnae (Ciliate).